The chain runs to 308 residues: Dipeptide transport system permease protein DppB (308 aa).

A run of 7 helical transmembrane segments spans residues 10 to 30 (WAMA…MKVI), 59 to 79 (LIFQ…GPSI), 100 to 120 (LGMT…VIAA), 131 to 151 (AMSL…TLLI), 168 to 188 (SPIH…AIIA), 228 to 248 (MPVI…SFVI), and 278 to 298 (VFYS…YGLL). Residues 94–295 (FPVSFELGMT…IMLFLVDLAY (202 aa)) enclose the ABC transmembrane type-1 domain.

It belongs to the binding-protein-dependent transport system permease family. OppBC subfamily.

The protein resides in the cell membrane. Its function is as follows. Probably part of the ABC transporter DppBCDE involved in dipeptide transport. Responsible for the translocation of the substrate across the membrane. The sequence is that of Dipeptide transport system permease protein DppB (dppB) from Bacillus subtilis (strain 168).